We begin with the raw amino-acid sequence, 431 residues long: Glutamate-1-semialdehyde 2,1-aminomutase (431 aa).

Lysine 265 bears the N6-(pyridoxal phosphate)lysine mark.

The protein belongs to the class-III pyridoxal-phosphate-dependent aminotransferase family. HemL subfamily. Homodimer. Pyridoxal 5'-phosphate is required as a cofactor.

The protein localises to the cytoplasm. It carries out the reaction (S)-4-amino-5-oxopentanoate = 5-aminolevulinate. It functions in the pathway porphyrin-containing compound metabolism; protoporphyrin-IX biosynthesis; 5-aminolevulinate from L-glutamyl-tRNA(Glu): step 2/2. The sequence is that of Glutamate-1-semialdehyde 2,1-aminomutase from Vibrio vulnificus (strain YJ016).